Consider the following 327-residue polypeptide: Meiotic coiled-coil protein 6 (327 aa).

Residues 66-188 (DAFERDSTQR…TETKEMNKIK (123 aa)) adopt a coiled-coil conformation. The segment covering 175 to 199 (RRMETETKEMNKIKPKNDSESDRFK) has biased composition (basic and acidic residues). The interval 175-234 (RRMETETKEMNKIKPKNDSESDRFKRNSQSLSQQSPLLDVHSPDNSNHRTMLNINNSSPI) is disordered. Low complexity predominate over residues 202–212 (SQSLSQQSPLL). Polar residues predominate over residues 217–232 (PDNSNHRTMLNINNSS). A coiled-coil region spans residues 243-297 (NEVKNRISRLQKTFADLENQHHSFQQICQTLRKRLENDSSTTKQRLSKLEEIIRN).

As to quaternary structure, interacts with alp4, kms1 and mbo1.

It localises to the nucleus. Its subcellular location is the cytoplasm. The protein resides in the cytoskeleton. The protein localises to the microtubule organizing center. It is found in the spindle pole body. Functionally, has a role in meiotic nuclear oscillation and recombination. Required to remodel astral microtubules into the 'horsetail' astral array maintaining the 'horsetail' nuclear movement. Promotes homologous paring of chromosomes during this movement. This Schizosaccharomyces pombe (strain 972 / ATCC 24843) (Fission yeast) protein is Meiotic coiled-coil protein 6 (mcp6).